Reading from the N-terminus, the 875-residue chain is Valine--tRNA ligase (875 aa).

The short motif at 44–54 (PNVTGKLHLGH) is the 'HIGH' region element. Positions 520 to 524 (KMSKS) match the 'KMSKS' region motif. Lysine 523 contacts ATP. Residues 804 to 875 (LEGLINIEEE…VRARLAQLKQ (72 aa)) are a coiled coil.

It belongs to the class-I aminoacyl-tRNA synthetase family. ValS type 1 subfamily. In terms of assembly, monomer.

The protein resides in the cytoplasm. It carries out the reaction tRNA(Val) + L-valine + ATP = L-valyl-tRNA(Val) + AMP + diphosphate. In terms of biological role, catalyzes the attachment of valine to tRNA(Val). As ValRS can inadvertently accommodate and process structurally similar amino acids such as threonine, to avoid such errors, it has a 'posttransfer' editing activity that hydrolyzes mischarged Thr-tRNA(Val) in a tRNA-dependent manner. The protein is Valine--tRNA ligase of Anoxybacillus flavithermus (strain DSM 21510 / WK1).